The chain runs to 149 residues: Deoxyuridine 5'-triphosphate nucleotidohydrolase (149 aa).

Substrate contacts are provided by residues 65 to 67 (RSG), N78, 82 to 84 (TID), and K92.

The protein belongs to the dUTPase family. Mg(2+) is required as a cofactor.

It catalyses the reaction dUTP + H2O = dUMP + diphosphate + H(+). The protein operates within pyrimidine metabolism; dUMP biosynthesis; dUMP from dCTP (dUTP route): step 2/2. This enzyme is involved in nucleotide metabolism: it produces dUMP, the immediate precursor of thymidine nucleotides and it decreases the intracellular concentration of dUTP so that uracil cannot be incorporated into DNA. The chain is Deoxyuridine 5'-triphosphate nucleotidohydrolase from Chlorobium chlorochromatii (strain CaD3).